Reading from the N-terminus, the 953-residue chain is 26S proteasome non-ATPase regulatory subunit 1 (953 aa).

M1 carries the post-translational modification N-acetylmethionine. T273 is subject to Phosphothreonine. Residues 277-319 (SVPGSTNTGTVPGSEKDSDPMETEEKTASAVAGKTPDASPEPK) form a disordered region. Phosphoserine is present on S290. The span at 290-303 (SEKDSDPMETEEKT) shows a compositional bias: basic and acidic residues. K310 is modified (N6-acetyllysine). Position 311 is a phosphothreonine (T311). S315 bears the Phosphoserine mark. 10 PC repeats span residues 403–436 (TATA…PGSA), 441–474 (GGLY…DIVR), 476–510 (GGSL…VTGE), 511–545 (AAGL…EKIL), 547–580 (GLAV…ILRR), 581–616 (SGMY…DVRR), 617–649 (AAVE…PHVR), 651–685 (GAAM…YVRQ), 686–726 (GALI…DVMA), and 729–761 (GAIL…PSVV). K720 bears the N6-acetyllysine mark. T830 is modified (phosphothreonine). A Phosphoserine modification is found at S834. 2 disordered regions span residues 839–881 (AKKK…LDNP) and 930–953 (AHGP…YIDD). Composition is skewed to basic and acidic residues over residues 842–852 (KEKEKEKKEEE) and 859–872 (AEKK…KEPE). Residues 936-953 (EEEEQEPEPPEPFEYIDD) show a composition bias toward acidic residues.

It belongs to the proteasome subunit S1 family. As to quaternary structure, component of the 19S proteasome regulatory particle complex. The 26S proteasome consists of a 20S core particle (CP) and two 19S regulatory subunits (RP). The regulatory particle is made of a lid composed of 9 subunits, a base containing 6 ATPases and few additional components including PSMD1. Interacts with ADRM1. Interacts with ZFAND1.

Component of the 26S proteasome, a multiprotein complex involved in the ATP-dependent degradation of ubiquitinated proteins. This complex plays a key role in the maintenance of protein homeostasis by removing misfolded or damaged proteins, which could impair cellular functions, and by removing proteins whose functions are no longer required. Therefore, the proteasome participates in numerous cellular processes, including cell cycle progression, apoptosis, or DNA damage repair. In Mus musculus (Mouse), this protein is 26S proteasome non-ATPase regulatory subunit 1 (Psmd1).